The primary structure comprises 138 residues: MNDYTRTIRLSDTDAAGVVYFASLLSICHEAYEASLEASGIDLKSFFRDSEVVIPIVHAEIDFFRPLYSGDRIIITLTTLQLKDTEFEITYQVGLVAPQSSLIAKAKTRHVAINPQTRQRTPLSESLMQWLKSTENSE.

Asp-14 is an active-site residue.

It belongs to the 4-hydroxybenzoyl-CoA thioesterase family. DHNA-CoA hydrolase subfamily.

The catalysed reaction is 1,4-dihydroxy-2-naphthoyl-CoA + H2O = 1,4-dihydroxy-2-naphthoate + CoA + H(+). It functions in the pathway cofactor biosynthesis; phylloquinone biosynthesis. The protein operates within quinol/quinone metabolism; 1,4-dihydroxy-2-naphthoate biosynthesis; 1,4-dihydroxy-2-naphthoate from chorismate: step 7/7. Its function is as follows. Catalyzes the hydrolysis of 1,4-dihydroxy-2-naphthoyl-CoA (DHNA-CoA) to 1,4-dihydroxy-2-naphthoate (DHNA), a reaction involved in phylloquinone (vitamin K1) biosynthesis. This Rippkaea orientalis (strain PCC 8801 / RF-1) (Cyanothece sp. (strain PCC 8801)) protein is 1,4-dihydroxy-2-naphthoyl-CoA hydrolase.